Consider the following 466-residue polypeptide: Ras GTPase-activating protein-binding protein 1 (466 aa).

One can recognise an NTF2 domain in the interval 11-133; the sequence is VGREFVRQYY…FYVHNDIFRY (123 aa). Residues K36, K50, K59, K64, K76, and K123 each participate in a glycyl lysine isopeptide (Lys-Gly) (interchain with G-Cter in ubiquitin) cross-link. An acidic disordered region region spans residues 142-225; the sequence is VTEPQEESEE…EPVLEETVPE (84 aa). Residue T143 is modified to Phosphothreonine. Disordered regions lie at residues 144 to 172 and 184 to 243; these read EPQE…DSGT and EEHL…QTVQ. Acidic residues-rich tracts occupy residues 145-157 and 185-206; these read PQEE…EEPE and EHLE…EQEP. Residue S149 is modified to Phosphoserine. Phosphoserine is present on residues S231, S232, S250, and S253. The segment at 255–329 is disordered; it reads TSKNLPPSGA…REAGEQGDIE (75 aa). Composition is skewed to basic and acidic residues over residues 297-307 and 318-329; these read PQRDQRVREQR and PIREAGEQGDIE. In terms of domain architecture, RRM spans 340–415; the sequence is HQLFIGNLPH…VRLNVEEKKT (76 aa). Glycyl lysine isopeptide (Lys-Gly) (interchain with G-Cter in ubiquitin) cross-links involve residues K353 and K357. S373 is subject to Phosphoserine. K376 participates in a covalent cross-link: Glycyl lysine isopeptide (Lys-Gly) (interchain with G-Cter in ubiquitin). At K376 the chain carries N6-acetyllysine; alternate. Residue K376 forms a Glycyl lysine isopeptide (Lys-Gly) (interchain with G-Cter in SUMO2); alternate linkage. K393 participates in a covalent cross-link: Glycyl lysine isopeptide (Lys-Gly) (interchain with G-Cter in ubiquitin); alternate. The RG-rich region stretch occupies residues 410–466; sequence VEEKKTRAAREGDRRDNRLRGPGGPRGGLGGGMRGPPRGGMVQKPGFGVGRGLAPRQ. Positions 413 to 428 are enriched in basic and acidic residues; the sequence is KKTRAAREGDRRDNRL. Residues 413 to 466 are disordered; it reads KKTRAAREGDRRDNRLRGPGGPRGGLGGGMRGPPRGGMVQKPGFGVGRGLAPRQ. An Asymmetric dimethylarginine modification is found at R429. Over residues 430–447 the composition is skewed to gly residues; that stretch reads GPGGPRGGLGGGMRGPPR. Position 435 is an asymmetric dimethylarginine; alternate (R435). An omega-N-methylarginine; alternate mark is found at R435, R447, R460, and R465. R460 bears the Dimethylated arginine; alternate mark.

As to quaternary structure, homodimer and oligomer. Component of a TAU mRNP complex, at least composed of IGF2BP1, ELAVL4 and G3BP1. Binds to the SH3 domain of Ras GTPase-activating protein (RASA1) in proliferating cells. No interaction in quiescent cells. Interacts (via NTF2 domain) with USP10; inhibiting stress granule formation by lowering G3BP1 valence. Interacts (via NTF2 domain) with CAPRIN1; promoting stress granule formation by lowering the saturation-concentration of G3BP1. Interacts (via NTF2 domain) with UBAP2L; promoting stress granule formation. Associates (via RG-rich region) with 40S ribosome subunits. Interacts with RPTOR and SPAG5; this complex is increased by oxidative stress. Interacts with ATXN2L. Interacts with STYXL1. Interacts with CGAS (via N-terminus); this interaction promotes the DNA-binding and activation of CGAS. Interacts (via C-terminus) with RIGI. Interacts with PABPC1. Interacts with QKI (isoforms QKI6 and QKI7); directing N(7)-methylguanine-containing mRNAs to stress granules. Mg(2+) serves as cofactor. Post-translationally, phosphorylation of the acidic disordered region regulates stress granule assembly. RASA1-dependent phosphorylation of Ser-149 induces a conformational change that prevents self-association. Dephosphorylation after HRAS activation is required for stress granule assembly. Ser-149 phosphorylation induces partial nuclear localization. In terms of processing, arg-435 is dimethylated, probably to asymmetric dimethylarginine. Ubiquitinated by TRIM21 via 'Lys-63'-linked polyubiquitination in the NTF2 domain in response to heat shock, leading to stress granule disassembly: ubiquitination promotes interaction with the FAF2 adapter, followed by interaction with VCP, which extracts G3BP1 from stress granules, leading to stress granule disassembly. In case of prolonged stress, ubiquitination by TRIM21 leads to autophagy-dependent degradation of G3BP1 via recruitment of ubiquitinated G3BP1 by SQSTM1 and/or CALCOCO2 to autophagosomes.

It localises to the cytoplasm. The protein resides in the cytosol. It is found in the perikaryon. The protein localises to the stress granule. Its subcellular location is the nucleus. It carries out the reaction ATP + H2O = ADP + phosphate + H(+). Its activity is regulated as follows. Under physiological conditions, G3BP1 adopts a compact state that is stabilized by intramolecular interactions between the RG-rich and the acidic regions that inhibit phase separation. Upon stress, polysomes disassemble and mRNAs are released in an unfolded protein-free state. Binding of unfolded mRNA to G3BP1 outcompetes the intramolecular interactions and RNA-bound G3BP1 adopts an expanded conformation in which the RG-rich region becomes exposed to engage in protein-protein and protein-RNA interactions, allowing physical cross-linking of RNA molecules to form protein-RNA condensates, leading to liquid-liquid phase separation (LLPS). In terms of biological role, protein involved in various processes, such as stress granule formation and innate immunity. Plays an essential role in stress granule formation. Stress granules are membraneless compartments that store mRNAs and proteins, such as stalled translation pre-initiation complexes, in response to stress. Promotes formation of stress granules phase-separated membraneless compartment by undergoing liquid-liquid phase separation (LLPS) upon unfolded RNA-binding: functions as a molecular switch that triggers RNA-dependent LLPS in response to a rise in intracellular free RNA concentrations. Also acts as an ATP- and magnesium-dependent helicase: unwinds DNA/DNA, RNA/DNA, and RNA/RNA substrates with comparable efficiency. Acts unidirectionally by moving in the 5' to 3' direction along the bound single-stranded DNA. Unwinds preferentially partial DNA and RNA duplexes having a 17 bp annealed portion and either a hanging 3' tail or hanging tails at both 5'- and 3'-ends. Plays an essential role in innate immunity by promoting CGAS and RIGI activity. Participates in the DNA-triggered cGAS/STING pathway by promoting the DNA binding and activation of CGAS. Triggers the condensation of cGAS, a process probably linked to the formation of membrane-less organelles. Also enhances RIGI-induced type I interferon production probably by helping RIGI at sensing pathogenic RNA. May also act as a phosphorylation-dependent sequence-specific endoribonuclease in vitro: Cleaves exclusively between cytosine and adenine and cleaves MYC mRNA preferentially at the 3'-UTR. This Pongo abelii (Sumatran orangutan) protein is Ras GTPase-activating protein-binding protein 1 (G3BP1).